Here is a 278-residue protein sequence, read N- to C-terminus: 3-methyl-2-oxobutanoate hydroxymethyltransferase (278 aa).

The Mg(2+) site is built by Asp43 and Asp82. Residues 43 to 44 (DS), Asp82, and Lys112 contribute to the 3-methyl-2-oxobutanoate site. A Mg(2+)-binding site is contributed by Glu114. The Proton acceptor role is filled by Glu181.

This sequence belongs to the PanB family. In terms of assembly, homodecamer; pentamer of dimers. Mg(2+) is required as a cofactor.

Its subcellular location is the cytoplasm. It carries out the reaction 3-methyl-2-oxobutanoate + (6R)-5,10-methylene-5,6,7,8-tetrahydrofolate + H2O = 2-dehydropantoate + (6S)-5,6,7,8-tetrahydrofolate. It participates in cofactor biosynthesis; (R)-pantothenate biosynthesis; (R)-pantoate from 3-methyl-2-oxobutanoate: step 1/2. Catalyzes the reversible reaction in which hydroxymethyl group from 5,10-methylenetetrahydrofolate is transferred onto alpha-ketoisovalerate to form ketopantoate. The polypeptide is 3-methyl-2-oxobutanoate hydroxymethyltransferase (Bacillus cereus (strain AH187)).